We begin with the raw amino-acid sequence, 166 residues long: Holin-like protein TcdE (166 aa).

Helical transmembrane passes span 15–35 (IFFY…LSEH), 36–56 (IFIK…CLSA), 77–97 (MIAC…NFLF), and 111–131 (HLGI…VSIL).

It belongs to the bacteriophage holin family. In terms of assembly, homomultimer.

It is found in the cell membrane. Functionally, holin-like protein required for secretion of toxins A and B (TcdA and TcdB). Facilitates the release of toxins to the extracellular environment without causing the bacterial cell lysis. Has weak activity, suggesting that it may act as a antiholin when multiple forms are produced. This chain is Holin-like protein TcdE, found in Clostridioides difficile (Peptoclostridium difficile).